The following is a 52-amino-acid chain: Insulin-2 (52 aa).

3 cysteine pairs are disulfide-bonded: cysteine 7–cysteine 38, cysteine 19–cysteine 51, and cysteine 37–cysteine 42.

The protein belongs to the insulin family. As to quaternary structure, heterodimer of a B chain and an A chain linked by two disulfide bonds.

The protein localises to the secreted. Its function is as follows. Insulin decreases blood glucose concentration. It increases cell permeability to monosaccharides, amino acids and fatty acids. It accelerates glycolysis, the pentose phosphate cycle, and glycogen synthesis in liver. The polypeptide is Insulin-2 (Huso dauricus (Kaluga sturgeon)).